A 235-amino-acid chain; its full sequence is Glucosamine-6-phosphate deaminase (235 aa).

Asp62 functions as the Proton acceptor; for enolization step in the catalytic mechanism. The active-site For ring-opening step is the Asn128. His130 acts as the Proton acceptor; for ring-opening step in catalysis. Glu135 (for ring-opening step) is an active-site residue.

It belongs to the glucosamine/galactosamine-6-phosphate isomerase family. NagB subfamily.

It carries out the reaction alpha-D-glucosamine 6-phosphate + H2O = beta-D-fructose 6-phosphate + NH4(+). It functions in the pathway amino-sugar metabolism; N-acetylneuraminate degradation; D-fructose 6-phosphate from N-acetylneuraminate: step 5/5. Its function is as follows. Catalyzes the reversible isomerization-deamination of glucosamine 6-phosphate (GlcN6P) to form fructose 6-phosphate (Fru6P) and ammonium ion. This Latilactobacillus sakei subsp. sakei (strain 23K) (Lactobacillus sakei subsp. sakei) protein is Glucosamine-6-phosphate deaminase.